A 345-amino-acid polypeptide reads, in one-letter code: DNA N(6)-methyladenine demethylase ALKBH1A (345 aa).

Residues Trp179 and Phe186 to Trp188 contribute to the substrate site. One can recognise a Fe2OG dioxygenase domain in the interval Arg225–Phe345. Residue Asn232 to Phe234 participates in 2-oxoglutarate binding. Residues His243, Asp245, and His299 each contribute to the Fe cation site. Arg336–Arg342 lines the 2-oxoglutarate pocket.

Belongs to the alkB family. Fe(2+) serves as cofactor. Mostly expressed in siliques, to a lower extent in roots, seedlings and rosette leaves, but barely in cauline leaves, stems and flowers.

Its subcellular location is the nucleus. It localises to the cytoplasm. It catalyses the reaction an N(6)-methyl-2'-deoxyadenosine in DNA + 2-oxoglutarate + O2 = a 2'-deoxyadenosine in DNA + formaldehyde + succinate + CO2. In terms of biological role, dioxygenase that catalyzes DNA N(6)-methyladenine (6 mA) demethylation to modulate gene expression and regulate seed germination. The polypeptide is DNA N(6)-methyladenine demethylase ALKBH1A (Arabidopsis thaliana (Mouse-ear cress)).